The chain runs to 480 residues: Protein nucleotidyltransferase YdiU (480 aa).

ATP contacts are provided by G86, G88, R89, K109, D121, G122, R172, and R179. D248 serves as the catalytic Proton acceptor. Positions 249 and 258 each coordinate Mg(2+). ATP is bound at residue D258.

The protein belongs to the SELO family. Mg(2+) serves as cofactor. The cofactor is Mn(2+).

The catalysed reaction is L-seryl-[protein] + ATP = 3-O-(5'-adenylyl)-L-seryl-[protein] + diphosphate. The enzyme catalyses L-threonyl-[protein] + ATP = 3-O-(5'-adenylyl)-L-threonyl-[protein] + diphosphate. It carries out the reaction L-tyrosyl-[protein] + ATP = O-(5'-adenylyl)-L-tyrosyl-[protein] + diphosphate. It catalyses the reaction L-histidyl-[protein] + UTP = N(tele)-(5'-uridylyl)-L-histidyl-[protein] + diphosphate. The catalysed reaction is L-seryl-[protein] + UTP = O-(5'-uridylyl)-L-seryl-[protein] + diphosphate. The enzyme catalyses L-tyrosyl-[protein] + UTP = O-(5'-uridylyl)-L-tyrosyl-[protein] + diphosphate. Nucleotidyltransferase involved in the post-translational modification of proteins. It can catalyze the addition of adenosine monophosphate (AMP) or uridine monophosphate (UMP) to a protein, resulting in modifications known as AMPylation and UMPylation. The chain is Protein nucleotidyltransferase YdiU from Salmonella paratyphi C (strain RKS4594).